A 239-amino-acid chain; its full sequence is RNA polymerase sigma-35 factor (239 aa).

Positions 1 to 27 (MMKLKFYLVYLWYKVLLKLGIKTDEIY) are excised as a propeptide. Positions 86-99 (DLISIGTIGLIKAV) match the Polymerase core binding motif. Residues 206–225 (QKDVADMLGISQSYISRLEK) constitute a DNA-binding region (H-T-H motif).

It belongs to the sigma-70 factor family. In terms of processing, proteolytically cleaved in the N-terminus probably by a SpoIIGA homolog to yield the active peptide.

In terms of biological role, sigma factors are initiation factors that promote the attachment of RNA polymerase to specific initiation sites and are then released. This sigma factor directs the transcription of crystal protein genes, a sporulation-regulated event. In Bacillus anthracis, this protein is RNA polymerase sigma-35 factor (sigE).